We begin with the raw amino-acid sequence, 682 residues long: Potassium-transporting ATPase ATP-binding subunit (682 aa).

The next 4 membrane-spanning stretches (helical) occupy residues 34–54 (PVMFVVWAGSVLTTLLTLAMV), 58–78 (IAGSALFTGVISLWLWFTVLF), 219–239 (IALTILLIALTIVFLLATATL), and 254–274 (VLVALLVCLIPTTIGGLLSAI). Residue aspartate 307 is the 4-aspartylphosphate intermediate of the active site. ATP-binding positions include aspartate 344, glutamate 348, 377–384 (FTAQSRMS), and lysine 395. Mg(2+) contacts are provided by aspartate 518 and aspartate 522. Transmembrane regions (helical) follow at residues 588-608 (FAIIPAAFAATYPQLNALNVM), 616-636 (AILSAVIFNALIIIFLIPLAL), and 662-682 (LVVPFIGIKVIDVLLTLLGLA).

This sequence belongs to the cation transport ATPase (P-type) (TC 3.A.3) family. Type IA subfamily. In terms of assembly, the system is composed of three essential subunits: KdpA, KdpB and KdpC.

It localises to the cell inner membrane. It catalyses the reaction K(+)(out) + ATP + H2O = K(+)(in) + ADP + phosphate + H(+). In terms of biological role, part of the high-affinity ATP-driven potassium transport (or Kdp) system, which catalyzes the hydrolysis of ATP coupled with the electrogenic transport of potassium into the cytoplasm. This subunit is responsible for energy coupling to the transport system and for the release of the potassium ions to the cytoplasm. The sequence is that of Potassium-transporting ATPase ATP-binding subunit from Salmonella paratyphi B (strain ATCC BAA-1250 / SPB7).